We begin with the raw amino-acid sequence, 510 residues long: Light-independent protochlorophyllide reductase subunit B (510 aa).

Asp36 contributes to the [4Fe-4S] cluster binding site. The active-site Proton donor is Asp296. 431–432 (GM) is a binding site for substrate.

It belongs to the ChlB/BchB/BchZ family. Protochlorophyllide reductase is composed of three subunits; ChlL, ChlN and ChlB. Forms a heterotetramer of two ChlB and two ChlN subunits. [4Fe-4S] cluster is required as a cofactor.

The protein localises to the plastid. It is found in the chloroplast. It carries out the reaction chlorophyllide a + oxidized 2[4Fe-4S]-[ferredoxin] + 2 ADP + 2 phosphate = protochlorophyllide a + reduced 2[4Fe-4S]-[ferredoxin] + 2 ATP + 2 H2O. Its pathway is porphyrin-containing compound metabolism; chlorophyll biosynthesis (light-independent). Its function is as follows. Component of the dark-operative protochlorophyllide reductase (DPOR) that uses Mg-ATP and reduced ferredoxin to reduce ring D of protochlorophyllide (Pchlide) to form chlorophyllide a (Chlide). This reaction is light-independent. The NB-protein (ChlN-ChlB) is the catalytic component of the complex. This Angiopteris evecta (Mule's foot fern) protein is Light-independent protochlorophyllide reductase subunit B.